The primary structure comprises 119 residues: Large ribosomal subunit protein uL18 (119 aa).

This sequence belongs to the universal ribosomal protein uL18 family. Part of the 50S ribosomal subunit; part of the 5S rRNA/L5/L18/L25 subcomplex. Contacts the 5S and 23S rRNAs.

Its function is as follows. This is one of the proteins that bind and probably mediate the attachment of the 5S RNA into the large ribosomal subunit, where it forms part of the central protuberance. This Clostridium tetani (strain Massachusetts / E88) protein is Large ribosomal subunit protein uL18.